A 278-amino-acid chain; its full sequence is Protein Rv2133c (278 aa).

The chain is Protein Rv2133c from Mycobacterium tuberculosis (strain ATCC 25618 / H37Rv).